Consider the following 163-residue polypeptide: Interleukin-17F (163 aa).

The N-terminal stretch at 1–30 is a signal peptide; it reads MTVKSLHVTAMVKYLLLLILGLAFLRETAA. N-linked (GlcNAc...) asparagine glycosylation is present at Asn83. 2 disulfides stabilise this stretch: Cys102/Cys152 and Cys107/Cys154.

This sequence belongs to the IL-17 family. Homodimer; disulfide-linked. Heterodimer with IL17A (IL17A-IL17F). Forms complexes with IL17RA and IL17RC receptors with 2:1 binding stoichiometry: two receptor chains for one interleukin molecule. IL17F homodimer forms predominantly complexes with IL17RC homodimer, whereas IL17A-IL17F favors complexes with IL17RA-IL17RC. IL17RA and IL17RC chains cannot distinguish between IL17A and IL17F molecules, potentially enabling the formation of topologically distinct complexes.

Its subcellular location is the secreted. Effector cytokine of innate and adaptive immune system involved in antimicrobial host defense and maintenance of tissue integrity. IL17A-IL17F signals via IL17RA-IL17RC heterodimeric receptor complex, triggering homotypic interaction of IL17RA and IL17RC chains with TRAF3IP2 adapter through SEFIR domains. This leads to downstream TRAF6-mediated activation of NF-kappa-B and MAPkinase pathways ultimately resulting in transcriptional activation of cytokines, chemokines, antimicrobial peptides and matrix metalloproteinases, with potential strong immune inflammation. IL17A-IL17F is primarily involved in host defense against extracellular bacteria and fungi by inducing neutrophilic inflammation. As signature effector cytokine of T-helper 17 cells (Th17), primarily induces neutrophil activation and recruitment at infection and inflammatory sites. Stimulates the production of antimicrobial beta-defensins DEFB1, DEFB103A, and DEFB104A by mucosal epithelial cells, limiting the entry of microbes through the epithelial barriers. IL17F homodimer can signal via IL17RC homodimeric receptor complex, triggering downstream activation of TRAF6 and NF-kappa-B signaling pathway. Via IL17RC induces transcriptional activation of IL33, a potent cytokine that stimulates group 2 innate lymphoid cells and adaptive T-helper 2 cells involved in pulmonary allergic response to fungi. Likely via IL17RC, promotes sympathetic innervation of peripheral organs by coordinating the communication between gamma-delta T cells and parenchymal cells. Stimulates sympathetic innervation of thermogenic adipose tissue by driving TGFB1 expression. Regulates the composition of intestinal microbiota and immune tolerance by inducing antimicrobial proteins that specifically control the growth of commensal Firmicutes and Bacteroidetes. The polypeptide is Interleukin-17F (IL17F) (Callithrix jacchus (White-tufted-ear marmoset)).